Reading from the N-terminus, the 300-residue chain is Protoheme IX farnesyltransferase (300 aa).

8 helical membrane-spanning segments follow: residues 24–44 (VTQL…PGMV), 46–66 (WHVL…AFAI), 94–114 (PQIL…LYTF), 118–138 (LTMW…TLLL), 146–166 (IVIG…AVTG), 172–192 (AWIL…VLAL), 224–244 (VILF…VVYL), and 278–298 (IVYL…RPLL).

This sequence belongs to the UbiA prenyltransferase family. Protoheme IX farnesyltransferase subfamily.

The protein resides in the cell inner membrane. It carries out the reaction heme b + (2E,6E)-farnesyl diphosphate + H2O = Fe(II)-heme o + diphosphate. It participates in porphyrin-containing compound metabolism; heme O biosynthesis; heme O from protoheme: step 1/1. Its function is as follows. Converts heme B (protoheme IX) to heme O by substitution of the vinyl group on carbon 2 of heme B porphyrin ring with a hydroxyethyl farnesyl side group. The sequence is that of Protoheme IX farnesyltransferase from Burkholderia ambifaria (strain MC40-6).